The following is an 858-amino-acid chain: Bifunctional uridylyltransferase/uridylyl-removing enzyme (858 aa).

Positions M1–L324 are uridylyltransferase. The interval S325–L681 is uridylyl-removing. Residues V443–L565 form the HD domain. ACT domains lie at Q682 to G763 and I790 to V858.

It belongs to the GlnD family. Mg(2+) is required as a cofactor.

The catalysed reaction is [protein-PII]-L-tyrosine + UTP = [protein-PII]-uridylyl-L-tyrosine + diphosphate. It carries out the reaction [protein-PII]-uridylyl-L-tyrosine + H2O = [protein-PII]-L-tyrosine + UMP + H(+). With respect to regulation, uridylyltransferase (UTase) activity is inhibited by glutamine, while glutamine activates uridylyl-removing (UR) activity. Modifies, by uridylylation and deuridylylation, the PII regulatory proteins (GlnB and homologs), in response to the nitrogen status of the cell that GlnD senses through the glutamine level. Under low glutamine levels, catalyzes the conversion of the PII proteins and UTP to PII-UMP and PPi, while under higher glutamine levels, GlnD hydrolyzes PII-UMP to PII and UMP (deuridylylation). Thus, controls uridylylation state and activity of the PII proteins, and plays an important role in the regulation of nitrogen assimilation and metabolism. The sequence is that of Bifunctional uridylyltransferase/uridylyl-removing enzyme from Burkholderia orbicola (strain AU 1054).